The following is a 246-amino-acid chain: Exosome complex component Rrp41 (246 aa).

This sequence belongs to the RNase PH family. Rrp41 subfamily. As to quaternary structure, component of the archaeal exosome complex. Forms a hexameric ring-like arrangement composed of 3 Rrp41-Rrp42 heterodimers. The hexameric ring associates with a trimer of Rrp4 and/or Csl4 subunits.

The protein localises to the cytoplasm. Catalytic component of the exosome, which is a complex involved in RNA degradation. Has 3'-&gt;5' exoribonuclease activity. Can also synthesize heteromeric RNA-tails. The sequence is that of Exosome complex component Rrp41 from Pyrobaculum neutrophilum (strain DSM 2338 / JCM 9278 / NBRC 100436 / V24Sta) (Thermoproteus neutrophilus).